Reading from the N-terminus, the 279-residue chain is Protein CMSS1 (279 aa).

Residues 1-10 (MADDLGDEWW) show a composition bias toward acidic residues. The segment at 1–89 (MADDLGDEWW…DVLAKSEPKP (89 aa)) is disordered. The span at 12-22 (NQPTGAGSSPE) shows a compositional bias: polar residues. Phosphoserine occurs at positions 19 and 24. The residue at position 167 (Arg-167) is an Omega-N-methylarginine. Residue Thr-212 is modified to Phosphothreonine.

The protein belongs to the CMS1 family.

The protein is Protein CMSS1 (CMSS1) of Homo sapiens (Human).